Consider the following 356-residue polypeptide: Zinc finger CW-type PWWP domain protein 2 (356 aa).

Residues Met-24–Pro-79 form a CW-type zinc finger. Zn(2+) is bound by residues Cys-33, Cys-38, Cys-60, and Cys-71. Residues Leu-98–Thr-162 form the PWWP domain. Positions Gln-279–Cys-307 are disordered.

In terms of biological role, histone methylation reader which binds to non-methylated (H3K4me0), monomethylated (H3K4me1), dimethylated (H3K4me2) and trimethylated (H3K4me3) 'Lys-4' on histone H3. The order of binding preference is H3K4me3 &gt; H3K4me2 &gt; H3K4me1 &gt; H3K4me0. The sequence is that of Zinc finger CW-type PWWP domain protein 2 (ZCWPW2) from Homo sapiens (Human).